A 115-amino-acid chain; its full sequence is T cell receptor beta variable 18 (115 aa).

An N-terminal signal peptide occupies residues 1-21 (MDTRLLCCAVICLLGAGLSNA). Residues 22-115 (GVMQNPRHLV…SAAYFCASSP (94 aa)) enclose the Ig-like domain. The cysteines at positions 42 and 111 are disulfide-linked.

Alpha-beta TR is a heterodimer composed of an alpha and beta chain; disulfide-linked. The alpha-beta TR is associated with the transmembrane signaling CD3 coreceptor proteins to form the TR-CD3 (TcR or TCR). The assembly of alpha-beta TR heterodimers with CD3 occurs in the endoplasmic reticulum where a single alpha-beta TR heterodimer associates with one CD3D-CD3E heterodimer, one CD3G-CD3E heterodimer and one CD247 homodimer forming a stable octameric structure. CD3D-CD3E and CD3G-CD3E heterodimers preferentially associate with TR alpha and TR beta chains, respectively. The association of the CD247 homodimer is the last step of TcR assembly in the endoplasmic reticulum and is required for transport to the cell surface.

Its subcellular location is the cell membrane. Functionally, v region of the variable domain of T cell receptor (TR) beta chain that participates in the antigen recognition. Alpha-beta T cell receptors are antigen specific receptors which are essential to the immune response and are present on the cell surface of T lymphocytes. Recognize peptide-major histocompatibility (MH) (pMH) complexes that are displayed by antigen presenting cells (APC), a prerequisite for efficient T cell adaptive immunity against pathogens. Binding of alpha-beta TR to pMH complex initiates TR-CD3 clustering on the cell surface and intracellular activation of LCK that phosphorylates the ITAM motifs of CD3G, CD3D, CD3E and CD247 enabling the recruitment of ZAP70. In turn ZAP70 phosphorylates LAT, which recruits numerous signaling molecules to form the LAT signalosome. The LAT signalosome propagates signal branching to three major signaling pathways, the calcium, the mitogen-activated protein kinase (MAPK) kinase and the nuclear factor NF-kappa-B (NF-kB) pathways, leading to the mobilization of transcription factors that are critical for gene expression and essential for T cell growth and differentiation. The T cell repertoire is generated in the thymus, by V-(D)-J rearrangement. This repertoire is then shaped by intrathymic selection events to generate a peripheral T cell pool of self-MH restricted, non-autoaggressive T cells. Post-thymic interaction of alpha-beta TR with the pMH complexes shapes TR structural and functional avidity. The protein is T cell receptor beta variable 18 of Homo sapiens (Human).